The chain runs to 904 residues: Protein translocase subunit SecA (904 aa).

Residues Q89, 107–111 (GEGKT), and D502 each bind ATP. The tract at residues 872-892 (VESDPTTWGEPSRNDPCPCGS) is disordered. Residues C888, C890, C899, and H900 each coordinate Zn(2+).

This sequence belongs to the SecA family. Part of the essential protein translocation apparatus which comprises SecA, SecYEG and auxiliary proteins SecDF-YajC and YidC. Homodimer. Requires Zn(2+) as cofactor.

The protein resides in the cell inner membrane. The protein localises to the cytoplasm. It catalyses the reaction ATP + H2O + cellular proteinSide 1 = ADP + phosphate + cellular proteinSide 2.. Part of the Sec protein translocase complex. Interacts with the SecYEG preprotein conducting channel. Has a central role in coupling the hydrolysis of ATP to the transfer of proteins into and across the cell membrane, serving both as a receptor for the preprotein-SecB complex and as an ATP-driven molecular motor driving the stepwise translocation of polypeptide chains across the membrane. The polypeptide is Protein translocase subunit SecA (Rhodobacter capsulatus (Rhodopseudomonas capsulata)).